The sequence spans 84 residues: Putative membrane protein insertion efficiency factor (84 aa).

The interval 61-84 is disordered; it reads SQGFEDPLPPNTKRTNLTHGRQTK. A compositionally biased stretch (polar residues) spans 72-84; that stretch reads TKRTNLTHGRQTK.

Belongs to the UPF0161 family.

It is found in the cell inner membrane. Functionally, could be involved in insertion of integral membrane proteins into the membrane. The protein is Putative membrane protein insertion efficiency factor of Leptospira borgpetersenii serovar Hardjo-bovis (strain JB197).